The sequence spans 116 residues: Phage-like element PBSX protein XkdD (116 aa).

This chain is Phage-like element PBSX protein XkdD (xkdD), found in Bacillus subtilis (strain 168).